Here is a 384-residue protein sequence, read N- to C-terminus: Dual-specificity RNA methyltransferase RlmN (384 aa).

Glu-105 (proton acceptor) is an active-site residue. Positions 111–350 constitute a Radical SAM core domain; the sequence is EDDRATLCVS…TIVRKTRGDD (240 aa). Residues Cys-118 and Cys-355 are joined by a disulfide bond. Residues Cys-125, Cys-129, and Cys-132 each contribute to the [4Fe-4S] cluster site. S-adenosyl-L-methionine contacts are provided by residues 179–180, Ser-211, 233–235, and Asn-312; these read GE and SLH. The active-site S-methylcysteine intermediate is Cys-355.

This sequence belongs to the radical SAM superfamily. RlmN family. The cofactor is [4Fe-4S] cluster.

It is found in the cytoplasm. It carries out the reaction adenosine(2503) in 23S rRNA + 2 reduced [2Fe-2S]-[ferredoxin] + 2 S-adenosyl-L-methionine = 2-methyladenosine(2503) in 23S rRNA + 5'-deoxyadenosine + L-methionine + 2 oxidized [2Fe-2S]-[ferredoxin] + S-adenosyl-L-homocysteine. The enzyme catalyses adenosine(37) in tRNA + 2 reduced [2Fe-2S]-[ferredoxin] + 2 S-adenosyl-L-methionine = 2-methyladenosine(37) in tRNA + 5'-deoxyadenosine + L-methionine + 2 oxidized [2Fe-2S]-[ferredoxin] + S-adenosyl-L-homocysteine. In terms of biological role, specifically methylates position 2 of adenine 2503 in 23S rRNA and position 2 of adenine 37 in tRNAs. m2A2503 modification seems to play a crucial role in the proofreading step occurring at the peptidyl transferase center and thus would serve to optimize ribosomal fidelity. This is Dual-specificity RNA methyltransferase RlmN from Shigella flexneri serotype 5b (strain 8401).